The sequence spans 413 residues: MKKVVSSLLIILGAAMLIFAIALPTYVVPKGKVLPKDIVSTTGTDPIKGNLLDASALAEGKPVSGKENLPECRGKDKQVSCFIWKDLELQSQRFTRAQEPTDDKVVTLEAGQTLFRTDRQEPKNLVNATVDRVTLDRKTQMPVADPVSTLDVNAPALNPNGEAAIGPFTRPGIQYQFPMGTDRRSYDYFDTQALKAQPIDYVGEEEQDGEKVYKFEQTVSPVELYPRLKEQLEADGDLSKADQSTLASLRLKFPAKVWGIEGADTKSAADSKDDKKKDGDKKDEKSPEVELSRYYTVKRTLWVQPDTGVIVNGKEDIWQFYAKDQDEADKMAQPENREKEMNNPKRTALYIPGAWNDESRAAQMDKAKEGLKTLKTMGTTVPWILGPLGLLLLLVGLVMALKRRRAERHANAL.

The first 22 residues, 1–22, serve as a signal peptide directing secretion; it reads MKKVVSSLLIILGAAMLIFAIA. The segment at 265–288 is disordered; the sequence is TKSAADSKDDKKKDGDKKDEKSPE.

Belongs to the PorA family.

It is found in the secreted. It localises to the cell wall. Forms water-filled channels that favor the permeation of cations. This chain is Porin PorA, found in Corynebacterium resistens (strain DSM 45100 / JCM 12819 / GTC 2026 / SICGH 158).